A 416-amino-acid chain; its full sequence is Leu/Ile/Val-binding protein homolog 4 (416 aa).

The first 26 residues, 1–26, serve as a signal peptide directing secretion; that stretch reads MSLKVFLQAGVACAALSLAGAAGASA.

It belongs to the leucine-binding protein family.

Functionally, component of an amino-acid transport system. The protein is Leu/Ile/Val-binding protein homolog 4 of Brucella abortus (strain 2308).